Here is a 70-residue protein sequence, read N- to C-terminus: UPF0270 protein VIBHAR_00073 (70 aa).

This sequence belongs to the UPF0270 family.

The sequence is that of UPF0270 protein VIBHAR_00073 from Vibrio campbellii (strain ATCC BAA-1116).